A 231-amino-acid chain; its full sequence is DNA mismatch repair protein MutH (231 aa).

Belongs to the MutH family.

Its subcellular location is the cytoplasm. Its function is as follows. Sequence-specific endonuclease that cleaves unmethylated GATC sequences. It is involved in DNA mismatch repair. The sequence is that of DNA mismatch repair protein MutH from Salmonella enteritidis PT4 (strain P125109).